Here is a 714-residue protein sequence, read N- to C-terminus: Polyribonucleotide nucleotidyltransferase (714 aa).

The Mg(2+) site is built by aspartate 488 and aspartate 494. In terms of domain architecture, KH spans 555–614; that stretch reads PRIEVMNIPTDKIRDVIGSGGKVIREIVEKTGAKINIEDDGTVKIASSNGKEIEAAKKWI. In terms of domain architecture, S1 motif spans 624–692; that stretch reads GEIYEGTVVK…ERGKVRLSMK (69 aa).

The protein belongs to the polyribonucleotide nucleotidyltransferase family. Mg(2+) is required as a cofactor.

It is found in the cytoplasm. It catalyses the reaction RNA(n+1) + phosphate = RNA(n) + a ribonucleoside 5'-diphosphate. Its function is as follows. Involved in mRNA degradation. Catalyzes the phosphorolysis of single-stranded polyribonucleotides processively in the 3'- to 5'-direction. In Brucella melitensis biotype 2 (strain ATCC 23457), this protein is Polyribonucleotide nucleotidyltransferase.